The primary structure comprises 1172 residues: MEIINNQNQYVPYNCLSNPENEILDIESLSSRSREQVAEISLGLTRFLLESLLPGASFGFALFDIIWGVIGPDQWNLFLAQIEQLIDQRIEAHVRNQAISRLEGLGDSYEVYIESLREWEASPNNEALQQDVRNRFSNTDNALITAIPILREQGFEIPLLSVYVQAANLHLSLLRDAVYFGQRWGLDTVTVNNHYNRLINLINTYSDHCAQWFNRGLDNFGGVSARYLDFQREVTISVLDIVALFPNYDIRTYPISTQSQLTREIYTSPVAEPGASLNANLQNILREPHLMDFLTRLVIYTGVQSGIYHWAGHEISSRTTGNLSSNIQFPLYGTAASADRAFNMNIHHSETIYRTLSAPIYSVSGGISPNRTRVVEGVRFLIARDNNLDSLPFLYRKEGTLDSFTELPPEDESTPPYIGYSHRLCHARFARSPVILEPSNFARLPVFSWTHRSASPTNEVSPSRITQIPWVKAHTLASGASVIKGPGFTGGDIMTRNNINLGDLGTLRVTVTGRLPQSYYIRLRYASVANSSGVFRHLPQPSYGISFPRTMGTDEPLTSRSFALTTLFTPITLTRAQEEFNLTIPRGVYIDRIEFVPVDATFEAGYDLERAQKAVNALFTSTNQRGLKTDITDYHIDQVSNLVECLSDEFCLDEKRELSEKVKHAKRLSDGRNLLQDRNFISINGLLDRGWRGSTDITIQGSDDVFKENYVTLPGTFDECYPTYLYQKIDESKLKAYTRYQLRGYIEDSQDLEIYLIRYNAKHEIVNVPGTGSLWPLSVENSIGPCGESNRCAPHLEWNPNLDCSCRDGEKCAHHSHHFSLDIDVGCTDLNEDLGVWVIFKIKTQDGHARIGNLEFLEEKPLVGEALARVKRAEKKWRDKRKKLEFETNIVYKEAKESVDALFVNSQYDKLKADTNIAMIHAADKRVHRIREAYLPELSVIPGVNADIFEELEGRIFTAYSLYDARNVIKNGDFNNGLLCWNVKGHVDVEEQNNHRSVLVVPEWEAEVSQEVRVCPGRGYILRVTAYKEGYGEGCVTIHEIEDNTDELKFSNCVEEEVYPSNTVTCNDYTANQEEYEGTYTSRNQGYDEAYESNSSVPANYASVYEEKAYTDGRRENSCEFNRGYRDYTPLPAGYVTKELEYFPGTAKVWIEIGETEGTFIVDSVELLLMEE.

The protein belongs to the delta endotoxin family.

Promotes colloidosmotic lysis by binding to the midgut epithelial cells of insects. The protein is Pesticidal crystal protein Cry1Ha (cry1Ha) of Bacillus thuringiensis.